The primary structure comprises 468 residues: Argininosuccinate synthase (468 aa).

ATP is bound by residues 10–18 and alanine 37; that span reads AYSGGLDTS. L-citrulline-binding residues include tyrosine 90 and serine 95. Residue glycine 120 coordinates ATP. L-aspartate-binding residues include threonine 122, asparagine 126, and aspartate 127. Asparagine 126 is a binding site for L-citrulline. Residues arginine 130, serine 182, serine 191, glutamate 267, and tyrosine 279 each contribute to the L-citrulline site. A compositionally biased stretch (low complexity) spans 445–457; it reads PVAAKATAKPVKA. Residues 445–468 are disordered; sequence PVAAKATAKPVKAPVKKPIAKKKG. The span at 458–468 shows a compositional bias: basic residues; it reads PVKKPIAKKKG.

It belongs to the argininosuccinate synthase family. Type 1 subfamily. As to quaternary structure, homotetramer.

Its subcellular location is the cytoplasm. The enzyme catalyses L-citrulline + L-aspartate + ATP = 2-(N(omega)-L-arginino)succinate + AMP + diphosphate + H(+). It participates in amino-acid biosynthesis; L-arginine biosynthesis; L-arginine from L-ornithine and carbamoyl phosphate: step 2/3. This Dechloromonas aromatica (strain RCB) protein is Argininosuccinate synthase.